Here is a 477-residue protein sequence, read N- to C-terminus: Transmembrane and coiled-coil domain protein 3 (477 aa).

A Phosphoserine modification is found at Ser46. The stretch at 112 to 153 (KQVFEKKNQKSAHSIAQLQKKLEQYHRKLREIEQNGASRSSK) forms a coiled coil. Disordered regions lie at residues 168-188 (KDAH…KSGM) and 249-277 (PKYG…GAGG). Ser253 is modified (phosphoserine). Positions 258 to 273 (SSGTSGSADSNGNQSF) are enriched in polar residues. The stretch at 282–398 (DSQGKLAVIL…KLELHQQEQQ (117 aa)) forms a coiled coil. 2 helical membrane passes run 417 to 437 (VILA…KFVS) and 450 to 470 (FFAV…LCAI).

Belongs to the TEX28 family. May form homodimers and heterodimers with TMCC2 or TMCC3 via the coiled-coil domains. Interacts with ribosomal proteins RPL4 and RPS6. Widely expressed, with highest levels in brain, spinal cord and testis.

It localises to the endoplasmic reticulum membrane. This is Transmembrane and coiled-coil domain protein 3 from Homo sapiens (Human).